Reading from the N-terminus, the 648-residue chain is Biosynthetic arginine decarboxylase (648 aa).

Lys109 is subject to N6-(pyridoxal phosphate)lysine. Residue 291-301 (IDVGGGLGIDF) coordinates substrate.

This sequence belongs to the Orn/Lys/Arg decarboxylase class-II family. SpeA subfamily. Mg(2+) is required as a cofactor. It depends on pyridoxal 5'-phosphate as a cofactor.

It carries out the reaction L-arginine + H(+) = agmatine + CO2. The protein operates within amine and polyamine biosynthesis; agmatine biosynthesis; agmatine from L-arginine: step 1/1. Catalyzes the biosynthesis of agmatine from arginine. The chain is Biosynthetic arginine decarboxylase from Prochlorococcus marinus (strain MIT 9215).